The following is a 70-amino-acid chain: MSSDKKQGFEASLERLEALVGELERGELPLEEALAAYEEGMKLARLCQKRLDSAEKRIEKIATPSGDEEA.

The protein belongs to the XseB family. In terms of assembly, heterooligomer composed of large and small subunits.

It localises to the cytoplasm. The enzyme catalyses Exonucleolytic cleavage in either 5'- to 3'- or 3'- to 5'-direction to yield nucleoside 5'-phosphates.. Bidirectionally degrades single-stranded DNA into large acid-insoluble oligonucleotides, which are then degraded further into small acid-soluble oligonucleotides. This chain is Exodeoxyribonuclease 7 small subunit, found in Magnetococcus marinus (strain ATCC BAA-1437 / JCM 17883 / MC-1).